Here is a 604-residue protein sequence, read N- to C-terminus: Pescadillo homolog (604 aa).

Positions 275–299 are disordered; that stretch reads NSEPAGLIEDKEGEDNKESSKTDES. A compositionally biased stretch (basic and acidic residues) spans 282-299; sequence IEDKEGEDNKESSKTDES. The BRCT domain maps to 337-427; that stretch reads ECRSLFKNLK…IILPTEGYIV (91 aa). 2 disordered regions span residues 518–557 and 574–604; these read KTFSNRTADNQPDVVDKSDTKEADDHMEDSHKQAEKDAAD and IEINQERKKDKVNLLKKRKKNADSSASAKGR. Basic and acidic residues-rich tracts occupy residues 531–557 and 577–586; these read VVDKSDTKEADDHMEDSHKQAEKDAAD and NQERKKDKVN.

The protein belongs to the pescadillo family.

The protein resides in the nucleus. It is found in the nucleolus. It localises to the nucleoplasm. Its function is as follows. Required for maturation of ribosomal RNAs and formation of the large ribosomal subunit. The protein is Pescadillo homolog (PES) of Oryza sativa subsp. japonica (Rice).